The chain runs to 826 residues: Putative pentatricopeptide repeat-containing protein At1g13630 (826 aa).

16 PPR repeats span residues Asn-228–Pro-262, Ser-263–Pro-297, Ser-298–Pro-332, Asp-333–Pro-367, Asp-368–Leu-402, Ser-404–Pro-438, Asp-439–Pro-473, Asn-474–Leu-508, Asp-509–Pro-543, Ser-544–Pro-578, Ser-579–Pro-613, Thr-614–Gln-648, Asp-661–Ala-695, Ser-696–Leu-730, Ser-731–Val-765, and Ser-766–Pro-800.

The protein belongs to the PPR family. P subfamily.

The polypeptide is Putative pentatricopeptide repeat-containing protein At1g13630 (Arabidopsis thaliana (Mouse-ear cress)).